A 455-amino-acid chain; its full sequence is Argininosuccinate lyase (455 aa).

This sequence belongs to the lyase 1 family. Argininosuccinate lyase subfamily.

It is found in the cytoplasm. It carries out the reaction 2-(N(omega)-L-arginino)succinate = fumarate + L-arginine. The protein operates within amino-acid biosynthesis; L-arginine biosynthesis; L-arginine from L-ornithine and carbamoyl phosphate: step 3/3. This is Argininosuccinate lyase from Shewanella sp. (strain ANA-3).